The sequence spans 589 residues: 3-hydroxy-3-methylglutaryl coenzyme A reductase 2-B (589 aa).

Over 1–35 (MDVRRRPVTKTLTAGEPLKSQNQHSSSLKASDALP) the chain is Lumenal. Residues 36-56 (LPLYLTNGLFFTMFFSVMYFL) traverse the membrane as a helical segment. At 57–79 (LHRWREKIRNSVPLHVVTLSELA) the chain is on the cytoplasmic side. The chain crosses the membrane as a helical span at residues 80–100 (ALVLLVASVIYLLGFFGIGFV). The Lumenal portion of the chain corresponds to 101-544 (QSLIRPSPDS…SKESPGPNSR (444 aa)). N-linked (GlcNAc...) asparagine glycosylation occurs at asparagine 256. The active-site Charge relay system is glutamate 268. Asparagine 332 is a glycosylation site (N-linked (GlcNAc...) asparagine). Residues lysine 400 and aspartate 476 each act as charge relay system in the active site. Residues 545–565 (LLASIVAGSVLAGELSLMSAL) form a helical membrane-spanning segment. Topologically, residues 566 to 589 (AAGQLVKSHMKFNRSSKDVSKLSS) are cytoplasmic. The Proton donor role is filled by histidine 574.

This sequence belongs to the HMG-CoA reductase family.

The protein localises to the endoplasmic reticulum membrane. It catalyses the reaction (R)-mevalonate + 2 NADP(+) + CoA = (3S)-3-hydroxy-3-methylglutaryl-CoA + 2 NADPH + 2 H(+). It participates in metabolic intermediate biosynthesis; (R)-mevalonate biosynthesis; (R)-mevalonate from acetyl-CoA: step 3/3. Functionally, catalyzes the synthesis of mevalonate, the specific precursor of all isoprenoid compounds present in plants. Component of the triterpene saponins (e.g. ginsenosides or panaxosides) and phytosterols biosynthetic pathways. Promotes triterpenes accumulation in roots. This chain is 3-hydroxy-3-methylglutaryl coenzyme A reductase 2-B, found in Panax ginseng (Korean ginseng).